The chain runs to 566 residues: Urease subunit alpha (566 aa).

In terms of domain architecture, Urease spans 128–566 (GGVDTHIHFI…LPMAQRYFLF (439 aa)). Ni(2+)-binding residues include His-133, His-135, and Lys-216. Lys-216 carries the post-translational modification N6-carboxylysine. A substrate-binding site is contributed by His-218. Positions 245 and 271 each coordinate Ni(2+). His-319 (proton donor) is an active-site residue. Asp-359 contacts Ni(2+).

Belongs to the metallo-dependent hydrolases superfamily. Urease alpha subunit family. May form a heterohexamer of 3 UreC (alpha) and 3 UreAB (gamma/beta) subunits. May also form a heterotrimer of UreA (gamma), UreB (beta) and UreC (alpha) subunits. Three heterotrimers associate to form the active enzyme. Ni cation is required as a cofactor. In terms of processing, carboxylation allows a single lysine to coordinate two nickel ions.

It localises to the cytoplasm. It carries out the reaction urea + 2 H2O + H(+) = hydrogencarbonate + 2 NH4(+). The protein operates within nitrogen metabolism; urea degradation; CO(2) and NH(3) from urea (urease route): step 1/1. In Pseudomonas savastanoi pv. phaseolicola (strain 1448A / Race 6) (Pseudomonas syringae pv. phaseolicola (strain 1448A / Race 6)), this protein is Urease subunit alpha.